A 664-amino-acid polypeptide reads, in one-letter code: Intraflagellar transport protein 70B (664 aa).

7 TPR repeats span residues 11–44, 45–78, 153–186, 188–220, 385–418, 423–456, and 458–491; these read DGEF…SSRS, RAGL…HPEL, YDGQ…SGYQ, DLSY…GIRQ, LTEQ…YDET, IPVL…CNDH, and VWKL…NYDN. Positions 507 to 534 form a coiled coil; the sequence is YIMTSQNEEAEELMRKIEKEEEQLSYGD. Residues 543 to 576 form a TPR 8 repeat; the sequence is CIVNLVIGTLYCAKGNYDFGISRVIKSLEPYHKK.

The protein belongs to the TTC30/dfy-1/fleer family. As to quaternary structure, interacts with the IFT B complex components IFT27, IFT46, IFT74, IFT52, IFT57, IFT80, IFT81 and IFT88. Interacts with KIF17.

It is found in the cell projection. It localises to the cilium. Functionally, required for polyglutamylation of axonemal tubulin. Plays a role in anterograde intraflagellar transport (IFT), the process by which cilia precursors are transported from the base of the cilium to the site of their incorporation at the tip. The chain is Intraflagellar transport protein 70B (Ift70b) from Mus musculus (Mouse).